Consider the following 391-residue polypeptide: Oxytocin receptor (391 aa).

Topologically, residues 1 to 38 (MEGAFAANWSAEAVNGSAAPPGTEGNRTAGPPQRNEAL) are extracellular. N-linked (GlcNAc...) asparagine glycosylation is found at Asn-8, Asn-15, and Asn-26. The helical transmembrane segment at 39 to 63 (ARVEVAVLCLILFLALSGNACVLLA) threads the bilayer. At 64–74 (LRTTRHKHSRL) the chain is on the cytoplasmic side. The helical transmembrane segment at 75–97 (FFFMKHLSIADLVVAVFQVLPQL) threads the bilayer. Residues 98 to 113 (LWDITFRFYGPDLLCR) are Extracellular-facing. Cys-112 and Cys-187 are oxidised to a cystine. A helical membrane pass occupies residues 114–135 (LVKYLQVVGMFASTYLLLLMSL). Residues 136 to 154 (DRCLAICQPLRSLSRRTDR) lie on the Cytoplasmic side of the membrane. The helical transmembrane segment at 155-175 (LAVLVTWLGCLVASAPQVHIF) threads the bilayer. Residues 176–202 (SLREVADGVFDCWAVFIQPWGPKAYIT) are Extracellular-facing. Residues 203–225 (WITLAVYIVPVIVLATCYGLISF) form a helical membrane-spanning segment. Residues 226 to 277 (KIWQNLRLKTAAAAAEAAAGAEGEAADWAGRAILARVSNVKLISKAKIRTVK) lie on the Cytoplasmic side of the membrane. Residues 278 to 296 (MTFIVVLAFIVCWTPFFFV) form a helical membrane-spanning segment. At 297-311 (QMWSVWDADAPKEAS) the chain is on the extracellular side. Residues 312 to 334 (PFIIAMLLASLNSCCNPWIYMLF) traverse the membrane as a helical segment. Over 335 to 391 (TGHLFQELVQRFLCCSFRRLKGSRPGETSVSKKSNSSTFVLSQYSSSQRRCSQPSTL) the chain is Cytoplasmic. Phosphoserine is present on residues Ser-368 and Ser-370.

The protein belongs to the G-protein coupled receptor 1 family. Vasopressin/oxytocin receptor subfamily.

It localises to the cell membrane. Functionally, receptor for oxytocin. The activity of this receptor is mediated by G proteins which activate a phosphatidylinositol-calcium second messenger system. The polypeptide is Oxytocin receptor (OXTR) (Bos taurus (Bovine)).